Consider the following 150-residue polypeptide: MDFINQTLFSKYTESNVDTIPYLLGLILALTNGSRILRFINSFIIICKHIVTTSKSAIDKMRKINNSEHNTKNAHEEYEEVMKQIREMRIHMTALFNSLHDDNVKWRMSESIRREKKHEMKMSDNRNEFKHSHNDTNICEKSGLETEVCL.

Residues 1–15 lie on the Lumenal side of the membrane; that stretch reads MDFINQTLFSKYTES. Asn5 carries N-linked (GlcNAc...) asparagine; by host glycosylation. Residues 16 to 44 traverse the membrane as a helical; Signal-anchor for type III membrane protein segment; the sequence is NVDTIPYLLGLILALTNGSRILRFINSFI. The Cytoplasmic segment spans residues 45–150; it reads IICKHIVTTS…KSGLETEVCL (106 aa).

The protein belongs to the rotavirus NSP4 family. In terms of assembly, homotetramer. Interacts with the immature particle in the viroplasm. Interacts with host CAV1, early and late in infection. Interacts with host integrin ITGA1/ITGB1 heterodimer. Interacts with host integrin ITGA2/ITGB1 heterodimer. Interaction with microtubules blocks trafficking to the Golgi apparatus. Post-translationally, the N-glycosyl content is primarily Man(9)GlcNAc, with a small amount of Man(8)GlcNAc.

The protein resides in the host rough endoplasmic reticulum membrane. It is found in the host membrane. Its subcellular location is the host caveola. It localises to the secreted. Plays an essential role in the virus replication cycle by acting as a viroporin. Creates a pore in the host endoplasmic reticulum and as a consequence releases Ca(2+) in the cytoplasm of infected cell. In turn, high levels of cytoplasmic calcium trigger membrane trafficking and transport of viral ER-associated proteins to viroplasms, sites of viral genome replication and immature particle assembly. In terms of biological role, the secreted form acts as an enterotoxin that causes phospholipase C-dependent elevation of the intracellular calcium concentration in host intestinal mucosa cells. Increased concentration of intracellular calcium disrupts the cytoskeleton and the tight junctions, raising the paracellular permeability. Potentiates chloride ion secretion through a calcium ion-dependent signaling pathway, inducing age-dependent diarrhea. To perform this enterotoxigenic role in vivo, NSP4 is released from infected enterocytes in a soluble form capable of diffusing within the intestinal lumen and interacting with host plasma membrane receptors on neighboring epithelial cells such as integrins ITGA1/ITGB1 and ITGA2/ITGB1. This is Non-structural glycoprotein 4 from Homo sapiens (Human).